Reading from the N-terminus, the 323-residue chain is Fructose-1,6-bisphosphatase class 1 (323 aa).

4 residues coordinate Mg(2+): Glu93, Asp114, Leu116, and Asp117. Substrate-binding positions include Asp117 to Ser120, Asn205, Tyr233, and Lys263. Glu269 serves as a coordination point for Mg(2+).

It belongs to the FBPase class 1 family. As to quaternary structure, homotetramer. It depends on Mg(2+) as a cofactor.

It localises to the cytoplasm. It catalyses the reaction beta-D-fructose 1,6-bisphosphate + H2O = beta-D-fructose 6-phosphate + phosphate. It functions in the pathway carbohydrate biosynthesis; gluconeogenesis. This is Fructose-1,6-bisphosphatase class 1 from Sulfurihydrogenibium sp. (strain YO3AOP1).